An 86-amino-acid polypeptide reads, in one-letter code: Large ribosomal subunit protein bL27 (86 aa).

A disordered region spans residues 1–21 (MAHKKGGGSSRNGRDSESKRL).

Belongs to the bacterial ribosomal protein bL27 family.

The protein is Large ribosomal subunit protein bL27 of Rubrobacter xylanophilus (strain DSM 9941 / JCM 11954 / NBRC 16129 / PRD-1).